The sequence spans 495 residues: NADP/NAD-dependent aldehyde dehydrogenase PuuC (495 aa).

Gly-244 to Gly-249 provides a ligand contact to NAD(+). Residues Glu-267 and Cys-302 contribute to the active site.

Belongs to the aldehyde dehydrogenase family.

It carries out the reaction an aldehyde + NADP(+) + H2O = a carboxylate + NADPH + 2 H(+). The catalysed reaction is an aldehyde + NAD(+) + H2O = a carboxylate + NADH + 2 H(+). The enzyme catalyses 4-(gamma-L-glutamylamino)butanal + NADP(+) + H2O = 4-(gamma-L-glutamylamino)butanoate + NADPH + 2 H(+). It catalyses the reaction 4-(gamma-L-glutamylamino)butanal + NAD(+) + H2O = 4-(gamma-L-glutamylamino)butanoate + NADH + 2 H(+). The protein operates within amine and polyamine degradation; putrescine degradation; 4-aminobutanoate from putrescine: step 3/4. Its activity is regulated as follows. Lithium ions exhibits the highest inhibition (97%). To a lesser extent (5-20%), potassium, sodium, and ammonium ions also inhibit PuuC activity. Transition metals, such as copper and zinc ions inhibit PuuC activity by more than 90%. The presence of heavy metals (mercury, silver) or sodium hydrogensulfite in the reaction mixture completely inactivate PuuC; in contrast, disulfide reductants such as DTT and 2-mercaptoethanol significantly increase its activity by 75% and 27%, respectively. Functionally, catalyzes the oxidation of 3-hydroxypropionaldehyde (3-HPA) to 3-hydroxypropionic acid (3-HP). It acts preferentially with NAD but can also use NADP. 3-HPA appears to be the most suitable substrate for PuuC followed by isovaleraldehyde, propionaldehyde, butyraldehyde, and valeraldehyde. It might play a role in propionate and/or acetic acid metabolisms. Also involved in the breakdown of putrescine through the oxidation of gamma-Glu-gamma-aminobutyraldehyde to gamma-Glu-gamma-aminobutyrate (gamma-Glu-GABA). The polypeptide is NADP/NAD-dependent aldehyde dehydrogenase PuuC (Escherichia coli (strain K12)).